The primary structure comprises 226 residues: Isoprenyl transferase (226 aa).

Asp12 is a catalytic residue. Mg(2+) is bound at residue Asp12. Substrate contacts are provided by residues 13–16 (GNAR), Trp17, Lys25, His29, and 57–59 (SSE). Catalysis depends on Asn60, which acts as the Proton acceptor. Substrate contacts are provided by residues Trp61, Arg63, Arg174, and 180–182 (RIS). Position 193 (Glu193) interacts with Mg(2+).

This sequence belongs to the UPP synthase family. Homodimer. The cofactor is Mg(2+).

Catalyzes the condensation of isopentenyl diphosphate (IPP) with allylic pyrophosphates generating different type of terpenoids. This Rickettsia typhi (strain ATCC VR-144 / Wilmington) protein is Isoprenyl transferase.